Reading from the N-terminus, the 722-residue chain is MGALRWLSLAAAASSALALTPEQLISAPRRSEAIPNPSGNIAVFSSSQYSFDTHESSSAWNLLDLRSGKITPLTNDSNVSEIVWLNDSTLLYINGTNAQIPGGSELWVSGLSNFPSGYKAASLPASFSGLKAVTTKSGDIKFVAYAQSYRNGTAYNEELAETYLSSARIYDSIYVRHWDTYLTTTFNAVFSGTLKKTQHARYASAGSLKNLVAPIPNAESPYPPFGGSSDYDISADGKWVAYKSKAPDVPQANHTTAYIYLVPHDGSETPVPINGPGSAPEGIEGDSNNPVFSPDSKSLAYLQMKDPTYESDRRVIYIYDLASKKITPLATEWDRSPDSLKWTDKSTIVAGSEDEGSGNLFLIPVKKATGDFIPEKLTNGKYASAFYLASGNTLVVTGSTLYSSWYVDLVSLNPKRGTIKNLVSAHEIDPELSGLGPEDISDIWFAGNWTDIHAWVIYPEGFDKSKTYPLAFLIHGGPQGAWYNSWSSRWNPKVFADQGYVVVAPNPTGSTGYGDELTDAIQNNWGGAPYEDLVKAWEYVRDNLDYVDTDRGVAAGASYGGFMVNWIQGSDLGREFKALVTHDGTFVADAKISTEELWFMEREFNGTFWDVRDNYRRFDPSAPERILRFATPHLIIHNDLDYRLPVAEGLSLFNVLQERGVPSRFLNFPDENHWVTSPENSLVWHQQVLGWLNKYSGIAEDNEDAVTLEDTVVPVVNINPPA.

A signal peptide spans 1–18 (MGALRWLSLAAAASSALA). 7 N-linked (GlcNAc...) asparagine glycosylation sites follow: N75, N78, N86, N94, N151, N253, and N448. The Charge relay system role is filled by S558. N-linked (GlcNAc...) asparagine glycosylation occurs at N605. Active-site charge relay system residues include D641 and H673.

This sequence belongs to the peptidase S9C family.

The protein resides in the secreted. In terms of biological role, extracellular dipeptidyl-peptidase which removes N-terminal dipeptides sequentially from polypeptides having unsubstituted N-termini. This is Probable dipeptidyl-peptidase 5 (dpp5) from Emericella nidulans (strain FGSC A4 / ATCC 38163 / CBS 112.46 / NRRL 194 / M139) (Aspergillus nidulans).